A 147-amino-acid polypeptide reads, in one-letter code: D-aminoacyl-tRNA deacylase (147 aa).

The Gly-cisPro motif, important for rejection of L-amino acids signature appears at 139 to 140 (GP).

The protein belongs to the DTD family. In terms of assembly, homodimer.

The protein localises to the cytoplasm. It catalyses the reaction glycyl-tRNA(Ala) + H2O = tRNA(Ala) + glycine + H(+). The enzyme catalyses a D-aminoacyl-tRNA + H2O = a tRNA + a D-alpha-amino acid + H(+). Its function is as follows. An aminoacyl-tRNA editing enzyme that deacylates mischarged D-aminoacyl-tRNAs. Also deacylates mischarged glycyl-tRNA(Ala), protecting cells against glycine mischarging by AlaRS. Acts via tRNA-based rather than protein-based catalysis; rejects L-amino acids rather than detecting D-amino acids in the active site. By recycling D-aminoacyl-tRNA to D-amino acids and free tRNA molecules, this enzyme counteracts the toxicity associated with the formation of D-aminoacyl-tRNA entities in vivo and helps enforce protein L-homochirality. This is D-aminoacyl-tRNA deacylase from Rippkaea orientalis (strain PCC 8801 / RF-1) (Cyanothece sp. (strain PCC 8801)).